The chain runs to 124 residues: Large ribosomal subunit protein bL17 (124 aa).

The protein belongs to the bacterial ribosomal protein bL17 family. As to quaternary structure, part of the 50S ribosomal subunit. Contacts protein L32.

In Acidithiobacillus ferrooxidans (strain ATCC 23270 / DSM 14882 / CIP 104768 / NCIMB 8455) (Ferrobacillus ferrooxidans (strain ATCC 23270)), this protein is Large ribosomal subunit protein bL17.